We begin with the raw amino-acid sequence, 96 residues long: Phosphoribosyl-ATP pyrophosphatase (96 aa).

This sequence belongs to the PRA-PH family.

It localises to the cytoplasm. It catalyses the reaction 1-(5-phospho-beta-D-ribosyl)-ATP + H2O = 1-(5-phospho-beta-D-ribosyl)-5'-AMP + diphosphate + H(+). The protein operates within amino-acid biosynthesis; L-histidine biosynthesis; L-histidine from 5-phospho-alpha-D-ribose 1-diphosphate: step 2/9. The sequence is that of Phosphoribosyl-ATP pyrophosphatase from Methanococcus maripaludis (strain C5 / ATCC BAA-1333).